The chain runs to 174 residues: MSKKFWSNIFLALGVFLAFAGVATISVSADSSATIESNTSSKIIDGATYEENIRGVIPITLTQYLHKAQTGEKFIVFVGFKECVHCRKFSPVMKQYLQQSQHPIYYLDYGNNGSFSMASQKQITDFYSTFATPMSFMGTPTVALLDNGKVVSMTAGDDTTLSDLQQITADYNNQ.

In terms of biological role, probably involved in pediocin PA-1 biosynthesis. In Pediococcus acidilactici, this protein is Pediocin PA-1 biosynthesis protein PedC (pedC).